Consider the following 290-residue polypeptide: Carbonic anhydrase-related protein (290 aa).

A Phosphoserine modification is found at Ser-5. The Alpha-carbonic anhydrase domain occupies 27-289 (VEWGYEEGVE…LSDRVIRAAF (263 aa)). Residue His-87 is the Proton donor/acceptor of the active site. Residues His-118 and His-141 each contribute to the Zn(2+) site.

The protein belongs to the alpha-carbonic anhydrase family.

Its function is as follows. Does not have a carbonic anhydrase catalytic activity. This is Carbonic anhydrase-related protein (Ca8) from Rattus norvegicus (Rat).